A 745-amino-acid chain; its full sequence is Catalase-peroxidase (745 aa).

The tryptophyl-tyrosyl-methioninium (Trp-Tyr) (with M-249) cross-link spans Trp97–Tyr223. Catalysis depends on His98, which acts as the Proton acceptor. The segment at residues Tyr223–Met249 is a cross-link (tryptophyl-tyrosyl-methioninium (Tyr-Met) (with W-97)). Residue His264 coordinates heme b. The segment at Lys345–Val368 is disordered.

It belongs to the peroxidase family. Peroxidase/catalase subfamily. Homodimer or homotetramer. It depends on heme b as a cofactor. Formation of the three residue Trp-Tyr-Met cross-link is important for the catalase, but not the peroxidase activity of the enzyme.

The enzyme catalyses H2O2 + AH2 = A + 2 H2O. It carries out the reaction 2 H2O2 = O2 + 2 H2O. Its function is as follows. Bifunctional enzyme with both catalase and broad-spectrum peroxidase activity. The protein is Catalase-peroxidase of Phenylobacterium zucineum (strain HLK1).